A 317-amino-acid chain; its full sequence is Tumor-associated calcium signal transducer 2 (317 aa).

Positions 1-24 are cleaved as a signal peptide; sequence MARGLDLAPLLLLLLAMVAGFCTA. The Extracellular portion of the chain corresponds to 25-270; the sequence is QINCTCPTNK…QFSMKRLTTG (246 aa). A glycan (N-linked (GlcNAc...) asparagine) is linked at asparagine 27. One can recognise a Thyroglobulin type-1 domain in the interval 64–139; the sequence is TSKCLLLKAR…TDKGDQSLRC (76 aa). Intrachain disulfides connect cysteine 67–cysteine 102, cysteine 113–cysteine 119, and cysteine 121–cysteine 139. An N-linked (GlcNAc...) asparagine glycan is attached at asparagine 114. N-linked (GlcNAc...) asparagine glycans are attached at residues asparagine 162 and asparagine 202. The chain crosses the membrane as a helical span at residues 271 to 291; the sequence is LIAVIAVVAVALVAGVVVLVV. Topologically, residues 292 to 317 are cytoplasmic; the sequence is TNRRKSGKYKKVELKELGEMRSEPSL.

Belongs to the EPCAM family.

The protein resides in the membrane. May function as a growth factor receptor. The protein is Tumor-associated calcium signal transducer 2 (Tacstd2) of Rattus norvegicus (Rat).